The following is a 181-amino-acid chain: MDKKQFIKICRKLYDRKYVVGSGGNVSVKEGDKIYLTPTGSILGFLKEDDIAEMDLDGNVIKGKPTSEKNLHLMIYRKRNDINAIIHTHSLISTFLSTINKEIELLTPEGKIFLKKIGYVDYYEAGSLKLAEETAKRDEDVIILKNHGVVCLGKDLIDAYIKVEVLEEQAKLTLLNLLVKK.

Substrate contacts are provided by residues 24-25 (GN), 39-40 (TG), and 66-67 (TS). The Proton donor/acceptor role is filled by Glu-68. Glu-68, His-87, His-89, and His-147 together coordinate Zn(2+).

This sequence belongs to the aldolase class II family. AraD/FucA subfamily. Homotetramer. Zn(2+) serves as cofactor.

The enzyme catalyses L-fuculose 1-phosphate = (S)-lactaldehyde + dihydroxyacetone phosphate. It participates in cofactor biosynthesis; coenzyme F420 biosynthesis. Trimethyl phosphonoacetate and DL-threose are competitive inhibitors with respect to dihydroxyacetone phosphate, and uncompetitive inhibitors with respect to DL-glyceraldehyde. Involved in the biosynthesis of the coenzyme F420 which requires phospholactate produced via the aldol cleavage of L-fuculose 1-phosphate and the NAD(+)-dependent oxidation of (S)-lactaldehyde. Catalyzes the reversible cleavage of L-fuculose 1-phosphate (Fuc1P) to yield dihydroxyacetone phosphate (DHAP) and S-lactaldehyde. FucA possesses a high specificity for the dihydroxyacetone phosphate (DHAP), but accepts a great variety of different aldehydes such as DL-glyceraldehyde and glycolaldehyde. The protein is L-fuculose phosphate aldolase (fucA) of Methanocaldococcus jannaschii (strain ATCC 43067 / DSM 2661 / JAL-1 / JCM 10045 / NBRC 100440) (Methanococcus jannaschii).